We begin with the raw amino-acid sequence, 317 residues long: MRVLIVKTSSMGDVLHTLPALTDAQQAIPGIQFDWAVEEGFAQIPSWHSAVDRVIPVAIRRWRKAWFSAPIKAERTAFRRAVCANQYDAVIDAQGLVKSAALVTRLAHGIKHGMDWSTAREPLASLFYNRKHHIAKQQHAVERTRELFAKSLGYDKPQSQGDYAIAKHFLHCQQAVSDPYAVFLHATTRDDKHWPEANWRELIGLVGNTGLRIKLPWGAPHEEARAKRLAEGFDYVDVLPRMSLEEVARVLAGAKFVVSVDTGLSHLTAALDRPNITLYGPTDPGLIGGYGKNQMACCSPEQNLANLDATSVFGKIH.

ADP-L-glycero-beta-D-manno-heptose contacts are provided by Thr-187, Thr-188, Lys-192, Glu-222, Met-242, Asp-261, Thr-262, Gly-263, and His-266.

The protein belongs to the glycosyltransferase 9 family.

It is found in the cell inner membrane. It carries out the reaction an alpha-Kdo-(2-&gt;4)-alpha-Kdo-(2-&gt;6)-lipid A + ADP-L-glycero-beta-D-manno-heptose = an L-alpha-D-Hep-(1-&gt;5)-[alpha-Kdo-(2-&gt;4)]-alpha-Kdo-(2-&gt;6)-lipid A + ADP + H(+). Its pathway is bacterial outer membrane biogenesis; LPS core biosynthesis. Glycosyltransferase involved in the biosynthesis of the core oligosaccharide region of lipopolysaccharide (LPS). Catalyzes the addition of the first heptose unit to one 3-deoxy-D-manno-octulosonic acid (Kdo) residue of the Kdo2-lipid A module. This Salmonella typhimurium (strain LT2 / SGSC1412 / ATCC 700720) protein is Lipopolysaccharide heptosyltransferase 1.